The sequence spans 274 residues: Rhamnulose-1-phosphate aldolase (274 aa).

Glu-117 is a catalytic residue. The Zn(2+) site is built by His-141, His-143, and His-212.

The protein belongs to the aldolase class II family. RhaD subfamily. Homotetramer. The cofactor is Zn(2+).

The protein resides in the cytoplasm. It carries out the reaction L-rhamnulose 1-phosphate = (S)-lactaldehyde + dihydroxyacetone phosphate. It functions in the pathway carbohydrate degradation; L-rhamnose degradation; glycerone phosphate from L-rhamnose: step 3/3. In terms of biological role, catalyzes the reversible cleavage of L-rhamnulose-1-phosphate to dihydroxyacetone phosphate (DHAP) and L-lactaldehyde. The chain is Rhamnulose-1-phosphate aldolase from Escherichia coli (strain SMS-3-5 / SECEC).